Here is a 426-residue protein sequence, read N- to C-terminus: Phosphoribosylamine--glycine ligase (426 aa).

Residues 109-312 enclose the ATP-grasp domain; that stretch reads KEVMEAAGVA…LAGVLNAVAT (204 aa). ATP is bound at residue 138 to 193; the sequence is LDYFGPMYVVKDDGLAAGKGVVVTADRAEARQHIHLVHAAGNPVLLESFLDGPEVS. Positions 282 and 284 each coordinate Mg(2+).

Belongs to the GARS family. Requires Mg(2+) as cofactor. The cofactor is Mn(2+).

It catalyses the reaction 5-phospho-beta-D-ribosylamine + glycine + ATP = N(1)-(5-phospho-beta-D-ribosyl)glycinamide + ADP + phosphate + H(+). It participates in purine metabolism; IMP biosynthesis via de novo pathway; N(1)-(5-phospho-D-ribosyl)glycinamide from 5-phospho-alpha-D-ribose 1-diphosphate: step 2/2. This is Phosphoribosylamine--glycine ligase from Corynebacterium ammoniagenes (Brevibacterium ammoniagenes).